Reading from the N-terminus, the 556-residue chain is 3-phosphoinositide-dependent protein kinase 1 (556 aa).

Position 9 is a phosphotyrosine; by SRC and INSR (tyrosine 9). Serine 25 is modified (phosphoserine). The tract at residues 26 to 80 is disordered; the sequence is PSMVRTQTESSTPPGIPGGSRQGPAMDGTAAEPRPGAGSLQHAQPPPQPRKKRPE. Residues 28–38 show a composition bias toward polar residues; sequence MVRTQTESSTP. Residues 82–342 enclose the Protein kinase domain; sequence FKFGKILGEG…YGPLKAHPFF (261 aa). Residues 92-94 and lysine 111 each bind ATP; that span reads SFS. Positions 113–157 are PIF-pocket; it reads LEKRHIIKENKVPYVTRERDVMSRLDHPFFVKLYFTFQDDEKLYF. ATP contacts are provided by residues 160-162 and glutamate 166; that span reads SYA. Residue aspartate 205 is the Proton acceptor of the active site. Residues glutamate 209 and aspartate 223 each contribute to the ATP site. Serine 241 carries the phosphoserine; by autocatalysis modification. The residue at position 304 (lysine 304) is an N6-acetyllysine. Residue threonine 354 is modified to Phosphothreonine; by MELK. Phosphotyrosine; by SRC and INSR occurs at positions 373 and 376. At serine 393 the chain carries Phosphoserine. Phosphoserine; by MAP3K5 is present on serine 394. Serine 396 carries the post-translational modification Phosphoserine. Serine 398 is modified (phosphoserine; by MAP3K5). Serine 410 carries the phosphoserine modification. The PH domain occupies 459-550; the sequence is KMGPVDKRKG…EVWRQRYQSH (92 aa). Phosphoserine; by PKC/PRKCQ is present on serine 501. At threonine 513 the chain carries Phosphothreonine; by autocatalysis. Serine 529 carries the post-translational modification Phosphoserine; by PKC/PRKCQ.

This sequence belongs to the protein kinase superfamily. AGC Ser/Thr protein kinase family. PDPK1 subfamily. Homodimer in its autoinhibited state. Active as monomer. Interacts with NPRL2, PPARG, PAK1, PTK2B, GRB14, PKN1 (via C-terminus), STRAP and IKKB. The Tyr-9 phosphorylated form interacts with SRC, RASA1 and CRK (via their SH2 domains). Interacts with SGK3 in a phosphorylation-dependent manner. The tyrosine-phosphorylated form interacts with PTPN6. The Ser-241 phosphorylated form interacts with YWHAH and YWHAQ. Binds INSR in response to insulin. Interacts (via PH domain) with SMAD3, SMAD4 and SMAD7. Interacts with PKN2; the interaction stimulates PDPK1 autophosphorylation, its PI(3,4,5)P3-dependent kinase activity toward 'Ser-473' of AKT1 but also activates its kinase activity toward PRKCD and PRKCZ. In terms of processing, phosphorylation on Ser-241 in the activation loop is required for full activity. PDPK1 itself can autophosphorylate Ser-241, leading to its own activation. Autophosphorylation is inhibited by the apoptotic C-terminus cleavage product of PKN2. Tyr-9 phosphorylation is critical for stabilization of both PDPK1 and the PDPK1/SRC complex via HSP90-mediated protection of PDPK1 degradation. Angiotensin II stimulates the tyrosine phosphorylation of PDPK1 in vascular smooth muscle in a calcium- and SRC-dependent manner. Phosphorylated on Tyr-9, Tyr-373 and Tyr-376 by INSR in response to insulin. Palmitate negatively regulates autophosphorylation at Ser-241 and palmitate-induced phosphorylation at Ser-529 and Ser-501 by PKC/PRKCQ negatively regulates its ability to phosphorylate PKB/AKT1. Phosphorylation at Thr-354 by MELK partially inhibits kinase activity, the inhibition is cooperatively enhanced by phosphorylation at Ser-394 and Ser-398 by MAP3K5. Post-translationally, autophosphorylated; autophosphorylation is inhibited by the apoptotic C-terminus cleavage product of PKN2. Monoubiquitinated in the kinase domain, deubiquitinated by USP4. Appears to be expressed ubiquitously. The Tyr-9 phosphorylated form is markedly increased in diseased tissue compared with normal tissue from lung, liver, colon and breast.

The protein localises to the cytoplasm. Its subcellular location is the nucleus. It is found in the cell membrane. The protein resides in the cell junction. It localises to the focal adhesion. It catalyses the reaction L-seryl-[protein] + ATP = O-phospho-L-seryl-[protein] + ADP + H(+). The enzyme catalyses L-threonyl-[protein] + ATP = O-phospho-L-threonyl-[protein] + ADP + H(+). With respect to regulation, homodimerization regulates its activity by maintaining the kinase in an autoinhibitory conformation. NPRL2 down-regulates its activity by interfering with tyrosine phosphorylation at the Tyr-9, Tyr-373 and Tyr-376 residues. The 14-3-3 protein YWHAQ acts as a negative regulator by association with the residues surrounding the Ser-241 residue. STRAP positively regulates its activity by enhancing its autophosphorylation and by stimulating its dissociation from YWHAQ. SMAD2, SMAD3, SMAD4 and SMAD7 also positively regulate its activity by stimulating its dissociation from YWHAQ. Activated by phosphorylation on Tyr-9, Tyr-373 and Tyr-376 by INSR in response to insulin. Functionally, serine/threonine kinase which acts as a master kinase, phosphorylating and activating a subgroup of the AGC family of protein kinases. Its targets include: protein kinase B (PKB/AKT1, PKB/AKT2, PKB/AKT3), p70 ribosomal protein S6 kinase (RPS6KB1), p90 ribosomal protein S6 kinase (RPS6KA1, RPS6KA2 and RPS6KA3), cyclic AMP-dependent protein kinase (PRKACA), protein kinase C (PRKCD and PRKCZ), serum and glucocorticoid-inducible kinase (SGK1, SGK2 and SGK3), p21-activated kinase-1 (PAK1), TSSK3, protein kinase PKN (PKN1 and PKN2). Plays a central role in the transduction of signals from insulin by providing the activating phosphorylation to PKB/AKT1, thus propagating the signal to downstream targets controlling cell proliferation and survival, as well as glucose and amino acid uptake and storage. Negatively regulates the TGF-beta-induced signaling by: modulating the association of SMAD3 and SMAD7 with TGF-beta receptor, phosphorylating SMAD2, SMAD3, SMAD4 and SMAD7, preventing the nuclear translocation of SMAD3 and SMAD4 and the translocation of SMAD7 from the nucleus to the cytoplasm in response to TGF-beta. Activates PPARG transcriptional activity and promotes adipocyte differentiation. Activates the NF-kappa-B pathway via phosphorylation of IKKB. The tyrosine phosphorylated form is crucial for the regulation of focal adhesions by angiotensin II. Controls proliferation, survival, and growth of developing pancreatic cells. Participates in the regulation of Ca(2+) entry and Ca(2+)-activated K(+) channels of mast cells. Essential for the motility of vascular endothelial cells (ECs) and is involved in the regulation of their chemotaxis. Plays a critical role in cardiac homeostasis by serving as a dual effector for cell survival and beta-adrenergic response. Plays an important role during thymocyte development by regulating the expression of key nutrient receptors on the surface of pre-T cells and mediating Notch-induced cell growth and proliferative responses. Provides negative feedback inhibition to toll-like receptor-mediated NF-kappa-B activation in macrophages. Its function is as follows. Catalytically inactive. The protein is 3-phosphoinositide-dependent protein kinase 1 (PDPK1) of Homo sapiens (Human).